Consider the following 635-residue polypeptide: Biosynthetic arginine decarboxylase (635 aa).

Lys100 carries the N6-(pyridoxal phosphate)lysine modification. 282-292 serves as a coordination point for substrate; it reads IDIGGGLGVDY.

This sequence belongs to the Orn/Lys/Arg decarboxylase class-II family. SpeA subfamily. Requires Mg(2+) as cofactor. It depends on pyridoxal 5'-phosphate as a cofactor.

The catalysed reaction is L-arginine + H(+) = agmatine + CO2. It functions in the pathway amine and polyamine biosynthesis; agmatine biosynthesis; agmatine from L-arginine: step 1/1. In terms of biological role, catalyzes the biosynthesis of agmatine from arginine. The protein is Biosynthetic arginine decarboxylase of Pelobacter propionicus (strain DSM 2379 / NBRC 103807 / OttBd1).